Consider the following 160-residue polypeptide: 6,7-dimethyl-8-ribityllumazine synthase (160 aa).

5-amino-6-(D-ribitylamino)uracil-binding positions include tryptophan 28, 59–61, and 81–83; these read ALE and CVI. (2S)-2-hydroxy-3-oxobutyl phosphate is bound at residue 86–87; it reads ET. Histidine 89 (proton donor) is an active-site residue. Asparagine 114 serves as a coordination point for 5-amino-6-(D-ribitylamino)uracil. Arginine 128 contacts (2S)-2-hydroxy-3-oxobutyl phosphate.

It belongs to the DMRL synthase family.

It catalyses the reaction (2S)-2-hydroxy-3-oxobutyl phosphate + 5-amino-6-(D-ribitylamino)uracil = 6,7-dimethyl-8-(1-D-ribityl)lumazine + phosphate + 2 H2O + H(+). Its pathway is cofactor biosynthesis; riboflavin biosynthesis; riboflavin from 2-hydroxy-3-oxobutyl phosphate and 5-amino-6-(D-ribitylamino)uracil: step 1/2. Functionally, catalyzes the formation of 6,7-dimethyl-8-ribityllumazine by condensation of 5-amino-6-(D-ribitylamino)uracil with 3,4-dihydroxy-2-butanone 4-phosphate. This is the penultimate step in the biosynthesis of riboflavin. The protein is 6,7-dimethyl-8-ribityllumazine synthase of Corynebacterium urealyticum (strain ATCC 43042 / DSM 7109).